The chain runs to 921 residues: Probable TonB-dependent receptor NMB1497 (921 aa).

Residues 1–25 (MRSSFRLKPICFYLMGVTLYHYSYA) form the signal peptide. One can recognise a TBDR plug domain in the interval 53 to 174 (DKKVFTDARA…LAGSANLRTL (122 aa)). Residues 185–921 (TYGLLLKGLT…TFLMTMSYKF (737 aa)) enclose the TBDR beta-barrel domain. The TonB C-terminal box motif lies at 904 to 921 (LTNFARGRTFLMTMSYKF).

Belongs to the TonB-dependent receptor family.

The protein localises to the cell outer membrane. In terms of biological role, probable receptor, TonB-dependent. This Neisseria meningitidis serogroup B (strain ATCC BAA-335 / MC58) protein is Probable TonB-dependent receptor NMB1497.